We begin with the raw amino-acid sequence, 93 residues long: Small ribosomal subunit protein uS19 (93 aa).

This sequence belongs to the universal ribosomal protein uS19 family.

In terms of biological role, protein S19 forms a complex with S13 that binds strongly to the 16S ribosomal RNA. In Anaplasma marginale (strain Florida), this protein is Small ribosomal subunit protein uS19.